A 239-amino-acid chain; its full sequence is MFQRLNKMFVGEVTTSSSHEPEFSEKEDDEWILVDFIDTCTGFSAEEEEEDEDIGEESSAEHTSVFSCLPTSLECLADTSDSCFLQFESCPMEESWFITPPPCFTAGGLTTIKVETSPMENLLIEHPSMSVYAVHNSCPGLSEASCGNDDYNSSGPRMEAQSELGTHIHCCVAALAAQATFLEQPKSFRPSQWIKGHSERQSLNRNGLRRQNLTRDCHTRQMKHRCWAVHQPCPRQYNY.

Positions 25 to 37 (EKEDDEWILVDFI) match the LIR motif.

In terms of assembly, interacts with p53/TP53 and HIPK2. Interacts with PRKCG, GABARAP, GABARAPL1, GABARAPL2, MAP1LC3A, MAP1LC3B and MAP1LC3C. In terms of tissue distribution, specifically expressed by acinar cells of chronic pancreatitis tissue.

The protein resides in the cytoplasm. Its subcellular location is the cytosol. The protein localises to the nucleus. It is found in the PML body. It localises to the cytoplasmic vesicle. The protein resides in the autophagosome. In terms of biological role, antiproliferative and proapoptotic protein involved in cell stress response which acts as a dual regulator of transcription and autophagy. Acts as a positive regulator of autophagy. In response to cellular stress or activation of autophagy, relocates to autophagosomes where it interacts with autophagosome-associated proteins GABARAP, GABARAPL1/L2, MAP1LC3A/B/C and regulates autophagy. Acts as an antioxidant and plays a major role in p53/TP53-driven oxidative stress response. Possesses both a p53/TP53-independent intracellular reactive oxygen species (ROS) regulatory function and a p53/TP53-dependent transcription regulatory function. Positively regulates p53/TP53 and p73/TP73 and stimulates their capacity to induce apoptosis and regulate cell cycle. In response to double-strand DNA breaks, promotes p53/TP53 phosphorylation on 'Ser-46' and subsequent apoptosis. Acts as a tumor suppressor by inducing cell death by an autophagy and caspase-dependent mechanism. Can reduce cell migration by regulating the expression of SPARC. The protein is Tumor protein p53-inducible nuclear protein 1 (Trp53inp1) of Rattus norvegicus (Rat).